The sequence spans 222 residues: MGQKVNPNGIRLGYIRDWRSTWYADSSRYATKLNEDIKVREFLHKKLAAAAVSKIQIERPAQNAKITIHTARSGIVIGKKGEDVEKLRAEVHKLMGIPVQINIEEVRKPEIDAKLVAESVAQQLEKRVMFRRAMKKAMQAAMKSGAKGIKIMVSGRLGGAEIARSEWARDGRVPLQTFRADVDYATAEALTTYGVIGVKVWIYKGEILPGQIAEKKNNKKRS.

Positions 39 to 107 (VREFLHKKLA…PVQINIEEVR (69 aa)) constitute a KH type-2 domain.

It belongs to the universal ribosomal protein uS3 family. In terms of assembly, part of the 30S ribosomal subunit. Forms a tight complex with proteins S10 and S14.

Its function is as follows. Binds the lower part of the 30S subunit head. Binds mRNA in the 70S ribosome, positioning it for translation. The polypeptide is Small ribosomal subunit protein uS3 (Francisella tularensis subsp. tularensis (strain FSC 198)).